We begin with the raw amino-acid sequence, 132 residues long: MARLTVEECMGRTNNKFKLVILASQRAHDLNSGASPVVKHKNSKNTIIALTEIANEQLDVHLLFNLAVQRCRKYMEKFINSDDSYVVHKSKDNIDIFQKNATSNFDELGANSLNVENSKFLDGDNFFLTQKE.

Belongs to the RNA polymerase subunit omega family. The RNAP catalytic core consists of 2 alpha, 1 beta, 1 beta' and 1 omega subunit. When a sigma factor is associated with the core the holoenzyme is formed, which can initiate transcription.

It carries out the reaction RNA(n) + a ribonucleoside 5'-triphosphate = RNA(n+1) + diphosphate. In terms of biological role, promotes RNA polymerase assembly. Latches the N- and C-terminal regions of the beta' subunit thereby facilitating its interaction with the beta and alpha subunits. This chain is DNA-directed RNA polymerase subunit omega, found in Ehrlichia ruminantium (strain Welgevonden).